We begin with the raw amino-acid sequence, 318 residues long: MNYSWITIMSLLVICKLASAKVVLIGKNTILSFDDVEATFTPIVRNSGECGILYVAEPLEACSDITNMAEKRSKYRSSYVLIVLGGCSFEEKVRKAQKAGYKAAIVYNDGYDELLVPMAGNSSGVDIHGLLVTRASGEVLKGYADQDEMKLWLIPGFGISSWSIMGITFISLLAMSAILATCFVVRRHQIRQSVRDLPHGGQGLSCMPRDLLQSMPTEVYSGVLEESSTSVTCAICIDDYCVGEKLRILPCKHKYHAVCIDSWLGRCRSFCPVCKQNPRTGNDVPPASETTPLISPSPNSITSLQSFYDLPIVVRVYL.

The first 20 residues, 1 to 20 (MNYSWITIMSLLVICKLASA), serve as a signal peptide directing secretion. Residues 22–163 (VVLIGKNTIL…IPGFGISSWS (142 aa)) are Lumenal-facing. The cysteines at positions 62 and 87 are disulfide-linked. The PA domain occupies 70-143 (EKRSKYRSSY…RASGEVLKGY (74 aa)). A glycan (N-linked (GlcNAc...) asparagine) is linked at asparagine 121. The helical transmembrane segment at 164–184 (IMGITFISLLAMSAILATCFV) threads the bilayer. At 185-318 (VRRHQIRQSV…DLPIVVRVYL (134 aa)) the chain is on the cytoplasmic side. An RING-type; atypical zinc finger spans residues 233 to 275 (CAICIDDYCVGEKLRILPCKHKYHAVCIDSWLGRCRSFCPVCK).

The protein localises to the prevacuolar compartment membrane. It localises to the protein storage vacuole membrane. Its function is as follows. Involved in the trafficking of vacuolar proteins. May function as a sorting receptor for protein trafficking to the protein storage vacuole (PSV). The polypeptide is Receptor homology region, transmembrane domain- and RING domain-containing protein 5 (RMR5) (Arabidopsis thaliana (Mouse-ear cress)).